We begin with the raw amino-acid sequence, 518 residues long: Zinc finger protein 449 (518 aa).

The SCAN box domain maps to 30 to 112 (RQRFRQFQYR…SLIEDLQREL (83 aa)). Polar residues predominate over residues 292–304 (NPTLGETPENSNL). The segment at 292-325 (NPTLGETPENSNLEEPLNPKPHKKKSPGEKPHRC) is disordered. C2H2-type zinc fingers lie at residues 323–345 (HRCP…QRIH), 351–373 (HKCP…QRLH), 379–401 (YECT…QRTH), 407–429 (YKCL…LKTH), 435–457 (HRCH…QRTH), 463–485 (FKCN…LRIH), and 491–513 (YKCT…QVTH).

Belongs to the krueppel C2H2-type zinc-finger protein family.

It is found in the nucleus. In terms of biological role, may be involved in transcriptional regulation. This is Zinc finger protein 449 (ZNF449) from Pan troglodytes (Chimpanzee).